A 430-amino-acid polypeptide reads, in one-letter code: Long-chain specific acyl-CoA dehydrogenase, mitochondrial (430 aa).

The transit peptide at 1 to 30 (MAARLLLRSLRVLKARSAPRPPPSARCSHS) directs the protein to the mitochondrion. The disordered stretch occupies residues 17 to 39 (SAPRPPPSARCSHSGAEARLETP). Lysine 42 carries the N6-acetyllysine modification. Serine 54 and serine 55 each carry phosphoserine. N6-acetyllysine; alternate is present on residues lysine 66 and lysine 81. An N6-succinyllysine; alternate mark is found at lysine 66 and lysine 81. N6-acetyllysine is present on residues lysine 92 and lysine 95. An N6-succinyllysine modification is found at lysine 165. 170-179 (IAMTEPGAGS) is an FAD binding site. Serine 179 contacts substrate. Serine 191 is modified (phosphoserine). 203–205 (FIT) contributes to the FAD binding site. Substrate is bound at residue 227 to 228 (AH). N6-succinyllysine is present on lysine 240. N6-acetyllysine; alternate is present on residues lysine 254 and lysine 279. N6-succinyllysine; alternate occurs at positions 254 and 279. Residues tyrosine 282 and 289 to 292 (PQER) each bind substrate. Residue glutamate 291 is the Proton acceptor of the active site. Arginine 317 serves as a coordination point for FAD. The residue at position 318 (lysine 318) is an N6-acetyllysine. Lysine 322 carries the post-translational modification N6-acetyllysine; alternate. Position 322 is an N6-succinyllysine; alternate (lysine 322). Glutamine 328 contacts FAD. Lysine 358 bears the N6-acetyllysine mark. At serine 362 the chain carries Phosphoserine. 385-389 (QLHGG) lines the FAD pocket. Residue 412–413 (GG) participates in substrate binding. 414-416 (TNE) contacts FAD.

The protein belongs to the acyl-CoA dehydrogenase family. As to quaternary structure, homotetramer. FAD serves as cofactor. Post-translationally, acetylation at Lys-318 and Lys-322 in proximity of the cofactor-binding sites strongly reduces catalytic activity. These sites are deacetylated by SIRT3. As to expression, expressed in heart, skeletal muscle, kidney, and brain. Expressed in liver (at protein level).

It is found in the mitochondrion matrix. It catalyses the reaction a long-chain 2,3-saturated fatty acyl-CoA + oxidized [electron-transfer flavoprotein] + H(+) = a long-chain (2E)-enoyl-CoA + reduced [electron-transfer flavoprotein]. The enzyme catalyses oxidized [electron-transfer flavoprotein] + hexadecanoyl-CoA + H(+) = (2E)-hexadecenoyl-CoA + reduced [electron-transfer flavoprotein]. It carries out the reaction hexanoyl-CoA + oxidized [electron-transfer flavoprotein] + H(+) = (2E)-hexenoyl-CoA + reduced [electron-transfer flavoprotein]. The catalysed reaction is octanoyl-CoA + oxidized [electron-transfer flavoprotein] + H(+) = (2E)-octenoyl-CoA + reduced [electron-transfer flavoprotein]. It catalyses the reaction decanoyl-CoA + oxidized [electron-transfer flavoprotein] + H(+) = (2E)-decenoyl-CoA + reduced [electron-transfer flavoprotein]. The enzyme catalyses dodecanoyl-CoA + oxidized [electron-transfer flavoprotein] + H(+) = (2E)-dodecenoyl-CoA + reduced [electron-transfer flavoprotein]. It carries out the reaction tetradecanoyl-CoA + oxidized [electron-transfer flavoprotein] + H(+) = (2E)-tetradecenoyl-CoA + reduced [electron-transfer flavoprotein]. The catalysed reaction is octadecanoyl-CoA + oxidized [electron-transfer flavoprotein] + H(+) = (2E)-octadecenoyl-CoA + reduced [electron-transfer flavoprotein]. It catalyses the reaction eicosanoyl-CoA + oxidized [electron-transfer flavoprotein] + H(+) = (2E)-eicosenoyl-CoA + reduced [electron-transfer flavoprotein]. The enzyme catalyses docosanoyl-CoA + oxidized [electron-transfer flavoprotein] + H(+) = (2E)-docosenoyl-CoA + reduced [electron-transfer flavoprotein]. It carries out the reaction tetracosanoyl-CoA + oxidized [electron-transfer flavoprotein] + H(+) = (2E)-tetracosenoyl-CoA + reduced [electron-transfer flavoprotein]. The catalysed reaction is (5E)-tetradecenoyl-CoA + oxidized [electron-transfer flavoprotein] + H(+) = (2E,5E)-tetradecadienoyl-CoA + reduced [electron-transfer flavoprotein]. It catalyses the reaction (5Z)-tetradecenoyl-CoA + oxidized [electron-transfer flavoprotein] + H(+) = (2E,5Z)-tetradecadienoyl-CoA + reduced [electron-transfer flavoprotein]. The enzyme catalyses oxidized [electron-transfer flavoprotein] + (9Z)-octadecenoyl-CoA + H(+) = (2E,9Z)-octadecadienoyl-CoA + reduced [electron-transfer flavoprotein]. Its pathway is lipid metabolism; mitochondrial fatty acid beta-oxidation. Functionally, long-chain specific acyl-CoA dehydrogenase is one of the acyl-CoA dehydrogenases that catalyze the first step of mitochondrial fatty acid beta-oxidation, an aerobic process breaking down fatty acids into acetyl-CoA and allowing the production of energy from fats. The first step of fatty acid beta-oxidation consists in the removal of one hydrogen from C-2 and C-3 of the straight-chain fatty acyl-CoA thioester, resulting in the formation of trans-2-enoyl-CoA. Among the different mitochondrial acyl-CoA dehydrogenases, long-chain specific acyl-CoA dehydrogenase can act on saturated and unsaturated acyl-CoAs with 6 to 24 carbons with a preference for 8 to 18 carbons long primary chains. The chain is Long-chain specific acyl-CoA dehydrogenase, mitochondrial from Mus musculus (Mouse).